The chain runs to 122 residues: Large ribosomal subunit protein uL14 (122 aa).

It belongs to the universal ribosomal protein uL14 family. As to quaternary structure, part of the 50S ribosomal subunit. Forms a cluster with proteins L3 and L19. In the 70S ribosome, L14 and L19 interact and together make contacts with the 16S rRNA in bridges B5 and B8.

Its function is as follows. Binds to 23S rRNA. Forms part of two intersubunit bridges in the 70S ribosome. This Bacillus cytotoxicus (strain DSM 22905 / CIP 110041 / 391-98 / NVH 391-98) protein is Large ribosomal subunit protein uL14.